Consider the following 1964-residue polypeptide: Neurogenic locus notch homolog protein 4 (1964 aa).

A signal peptide spans 1–20; that stretch reads MQPQLLLLLLLPLNFPVILT. 4 consecutive EGF-like domains span residues 21–60, 61–112, 115–152, and 153–189; these read RELLCGGSPEPCANGGTCLRLSRGQGICQCAPGFLGETCQ, FPDP…DRCQ, LEELCPPSFCSNGGHCYVQASGRPQCSCEPGWTGEQCQ, and LRDFCSANPCANGGVCLATYPQIQCRCPPGFEGHTCE. Over 21-1443 the chain is Extracellular; the sequence is RELLCGGSPE…TRPSANQLPW (1423 aa). Intrachain disulfides connect Cys-25/Cys-38, Cys-32/Cys-48, Cys-50/Cys-59, Cys-65/Cys-77, Cys-71/Cys-100, Cys-102/Cys-111, Cys-119/Cys-130, Cys-124/Cys-140, Cys-142/Cys-151, Cys-157/Cys-168, Cys-162/Cys-177, Cys-179/Cys-188, Cys-195/Cys-208, Cys-202/Cys-217, Cys-219/Cys-228, Cys-235/Cys-246, Cys-240/Cys-259, Cys-261/Cys-270, Cys-277/Cys-288, Cys-282/Cys-297, Cys-299/Cys-308, Cys-315/Cys-329, Cys-323/Cys-338, Cys-340/Cys-349, Cys-356/Cys-367, Cys-361/Cys-376, Cys-378/Cys-387, Cys-393/Cys-404, Cys-398/Cys-415, Cys-417/Cys-426, Cys-433/Cys-449, Cys-443/Cys-458, Cys-460/Cys-469, Cys-476/Cys-487, Cys-481/Cys-496, Cys-498/Cys-507, Cys-514/Cys-525, Cys-519/Cys-534, Cys-536/Cys-545, Cys-552/Cys-563, Cys-557/Cys-572, Cys-574/Cys-583, Cys-590/Cys-601, Cys-595/Cys-610, Cys-612/Cys-621, Cys-626/Cys-637, Cys-631/Cys-646, Cys-648/Cys-655, Cys-662/Cys-669, Cys-664/Cys-674, Cys-676/Cys-685, Cys-692/Cys-703, Cys-697/Cys-712, Cys-714/Cys-723, Cys-730/Cys-741, Cys-735/Cys-750, Cys-752/Cys-761, Cys-768/Cys-779, Cys-773/Cys-788, Cys-790/Cys-799, Cys-807/Cys-818, Cys-812/Cys-827, Cys-829/Cys-838, Cys-845/Cys-856, Cys-850/Cys-865, Cys-867/Cys-876, Cys-882/Cys-903, Cys-897/Cys-912, Cys-914/Cys-923, Cys-930/Cys-941, Cys-935/Cys-950, Cys-952/Cys-961, Cys-968/Cys-979, Cys-973/Cys-988, Cys-990/Cys-999, Cys-1006/Cys-1019, Cys-1011/Cys-1028, Cys-1030/Cys-1039, Cys-1046/Cys-1057, Cys-1051/Cys-1069, Cys-1071/Cys-1080, Cys-1087/Cys-1098, Cys-1092/Cys-1110, Cys-1112/Cys-1121, Cys-1130/Cys-1142, Cys-1136/Cys-1155, Cys-1157/Cys-1166, Cys-1174/Cys-1187, Cys-1183/Cys-1199, Cys-1210/Cys-1234, Cys-1216/Cys-1229, Cys-1225/Cys-1241, Cys-1247/Cys-1273, Cys-1255/Cys-1268, and Cys-1264/Cys-1280. The region spanning 191 to 229 is the EGF-like 5; calcium-binding domain; the sequence is DINECFLEPGPCPQGTSCHNTLGSYQCLCPVGQEGPQCK. Positions 231–271 constitute an EGF-like 6 domain; the sequence is RKGACPPGSCLNGGTCQLVPEGHSTFHLCLCPPGFTGLDCE. The EGF-like 7; calcium-binding domain maps to 273–309; the sequence is NPDDCVRHQCQNGATCLDGLDTYTCLCPKTWKGWDCS. An EGF-like 8; calcium-binding domain is found at 311–350; it reads DIDECEARGPPRCRNGGTCQNTAGSFHCVCVSGWGGAGCE. The 37-residue stretch at 352–388 folds into the EGF-like 9; calcium-binding domain; it reads NLDDCAAATCAPGSTCIDRVGSFSCLCPPGRTGLLCH. Positions 389-427 constitute an EGF-like 10 domain; that stretch reads LEDMCLSQPCHVNAQCSTNPLTGSTLCICQPGYSGSTCH. An EGF-like 11; calcium-binding domain is found at 429–470; the sequence is DLDECQMAQQGPSPCEHGGSCINTPGSFNCLCLPGYTGSRCE. The EGF-like 12; calcium-binding domain maps to 472-508; it reads DHNECLSQPCHPGSTCLDLLATFHCLCPPGLEGRLCE. Positions 510–546 constitute an EGF-like 13; calcium-binding domain; it reads EVNECTSNPCLNQAACHDLLNGFQCLCLPGFTGARCE. Positions 548–584 constitute an EGF-like 14; calcium-binding domain; sequence DMDECSSTPCANGGRCRDQPGAFYCECLPGFEGPHCE. Residues 586 to 622 form the EGF-like 15; calcium-binding domain; that stretch reads EVDECLSDPCPVGASCLDLPGAFFCLCRPGFTGQLCE. 14 EGF-like domains span residues 623–656, 658–686, 688–724, 726–762, 764–800, 803–839, 841–877, 878–924, 926–962, 964–1000, 1002–1040, 1042–1081, 1083–1122, and 1126–1167; these read VPLCTPNMCQPGQQCQGQEHRAPCLCPDGSPGCV, AEDNCPCHHGHCQRSLCVCDEGWTGPECE, ELGGCISTPCAHGGTCHPQPSGYNCTCPAGYMGLTCS, EVTACHSGPCLNGGSCSIRPEGYSCTCLPSHTGRHCQ, AVDHCVSASCLNGGTCVNKPGTFFCLCATGFQGLHCE, TNPSCADSPCRNKATCQDTPRGARCLCSPGYTGSSCQ, LIDLCARKPCPHTARCLQSGPSFQCLCLQGWTGALCD, FPLS…KLCQ, NVNPCEPNPCHHGSTCVPQPSGYVCQCAPGYEGQNCS, VLDACQSQPCHNHGTCTSRPGGFHCACPPGFVGLRCE, DVDECLDRPCHPSGTAACHSLANAFYCQCLPGHTGQRCE, EMDLCQSQPCSNGGSCEITTGPPPGFTCHCPKGFEGPTCS, KALSCGIHHCHNGGLCLPSPKPGSPPLCACLSGFGGPDCL, and APPG…PRCQ. Asn-711 is a glycosylation site (N-linked (GlcNAc...) asparagine). A glycan (N-linked (GlcNAc...) asparagine) is linked at Asn-960. N-linked (GlcNAc...) asparagine glycosylation is present at Asn-1139. 3 LNR repeats span residues 1166–1209, 1210–1241, and 1247–1287; these read CQRP…PWKG, CPPHSQCWLLFRDGRCHPQCDSEECLFDGYDC, and CIPA…GEDS. A disordered region spans residues 1345-1369; it reads EELSGARDSSSWERQAPPTQPLGKE. A helical transmembrane segment spans residues 1444-1464; it reads PILCSPVVGVLLLALGALLVL. Residues 1465–1964 lie on the Cytoplasmic side of the membrane; the sequence is QLIRRRRREH…PLNSVVRNLN (500 aa). The disordered stretch occupies residues 1516–1535; it reads VDEDGVAMCSGPEEGEAEET. ANK repeat units lie at residues 1628–1657, 1661–1691, 1695–1724, 1728–1757, and 1761–1790; these read TGETPLHLAARFSRPTAARRLLEAGANPNQ, AGRTPLHTAVAADAREVCQLLLASRQTTVDA, DGTTPLMLAARLAVEDLVEELIAARADVGA, RGKTALHWAAAVNNARAARSLLQAGADKDA, and REQTPLFLAAREGAVEVAQLLLELGAARGL. A disordered region spans residues 1879–1907; the sequence is RSGSCGGPTTRGRRFSAGSRGRRGARASQ.

The protein belongs to the NOTCH family. Heterodimer of a C-terminal fragment N(TM) and a N-terminal fragment N(EC) which are probably linked by disulfide bonds. Interacts with MAML1, MAML2 and MAML3 which act as transcriptional coactivators for NOTCH4. In terms of processing, synthesized in the endoplasmic reticulum as an inactive form which is proteolytically cleaved by a furin-like convertase in the trans-Golgi network before it reaches the plasma membrane to yield an active, ligand-accessible form. Cleavage results in a C-terminal fragment N(TM) and a N-terminal fragment N(EC). Following ligand binding, it is cleaved by TNF-alpha converting enzyme (TACE) to yield a membrane-associated intermediate fragment called notch extracellular truncation (NEXT). This fragment is then cleaved by presenilin dependent gamma-secretase to release a notch-derived peptide containing the intracellular domain (NICD) from the membrane. Phosphorylated. Highly expressed in lung, moderately in heart kidney, and at lower levels in the ovary and skeletal muscle. A very low expression is seen in the brain, intestine, liver and testis.

It localises to the cell membrane. Its subcellular location is the nucleus. In terms of biological role, functions as a receptor for membrane-bound ligands Jagged1, Jagged2 and Delta1 to regulate cell-fate determination. Upon ligand activation through the released notch intracellular domain (NICD) it forms a transcriptional activator complex with RBPJ/RBPSUH and activates genes of the enhancer of split locus. Affects the implementation of differentiation, proliferation and apoptotic programs. May regulate branching morphogenesis in the developing vascular system. This is Neurogenic locus notch homolog protein 4 from Mus musculus (Mouse).